Here is a 777-residue protein sequence, read N- to C-terminus: MDRVLSRADKERLLELLKLPRQLWGDFGRMQQAYKQQSLLLHPDKGGSHALMQELNSLWGTFKTEVYNLRMNLGGTGFQNAERGTEESGHSPLHDDYWSFSYGSKYFTREWNDFFRKWDPSYQSPPKTAESSEQPDLFCYEEPLLSPNPSPPTDTPAHPAGRRRNPCVAEPDDSISPDPPRTPVSRKRPRPAGATGGGGGGVHANGGSVFGHPTGGTSTPAHPPPYHSQGGSESMGGSDSSGFAEGSFRSDPRGESENESYSQSCSQSSFNATPPKKAREDPAPSDFPSSLTGYLSHAIYSNKTFPAFLVYSTKEKCKQLYDTIGKFRPEFKCLVHYEEGGMLFFLTMTKHRVSAVKNYCSKLCSVSFLMCKAVTKPMECYQVVTAAPFQLITENKPGLHQFEFTDEPEEQKAVDWIMVADFALENNLDDPLLIMGYYLDFAKEVPSCIKCSKEETRLQIHWKNHRKHAENADLFLNCKAQKTICQQAADGVLASRRLKLVECTRSQLLKERLQQSLLRLKELGSSDALLYLAGVAWYQCLLEDFPQTLFKMLKLLTENVPKRRNILFRGPVNSGKTGLAAALISLLGGKSLNINCPADKLAFELGVAQDQFVVCFEDVKGQIALNKQLQPGMGVANLDNLRDYLDGSVKVNLEKKHSNKRSQLFPPCVCTMNEYLLPQTVWARFHMVLDFTCKPHLAQALEKCEFLQRERIIQSGDTLALLLIWNFTSDVFDPDIQGLVKEVRDQFAAECSYSLFCDILCNVQEGDDPLKDICEYS.

The residue at position 1 (Met1) is an N-acetylmethionine; by host. Positions 12-75 constitute a J domain; it reads RLLELLKLPR…VYNLRMNLGG (64 aa). The LXCXE motif signature appears at 137-141; that stretch reads LFCYE. The disordered stretch occupies residues 140–287; sequence YEEPLLSPNP…AREDPAPSDF (148 aa). Residues 194–204 are compositionally biased toward gly residues; sequence ATGGGGGGVHA. 2 stretches are compositionally biased toward low complexity: residues 228-242 and 259-269; these read SQGGSESMGGSDSSG and ESYSQSCSQSS. Phosphothreonine; by host is present on Thr273. A Nuclear localization signal motif is present at residues 274–281; the sequence is PPKKARED. The T-ag OBD DNA-binding region spans 288–402; sequence PSSLTGYLSH…TENKPGLHQF (115 aa). A T-ag D1-type zinc finger spans residues 411 to 505; the sequence is QKAVDWIMVA…RRLKLVECTR (95 aa). 4 residues coordinate Zn(2+): Cys448, Cys451, His461, and His465. One can recognise an SF3 helicase domain in the interval 544–704; it reads DFPQTLFKML…PHLAQALEKC (161 aa). 570–577 provides a ligand contact to ATP; it reads GPVNSGKT.

In terms of assembly, forms homohexamers in the presence of ATP. Interacts with host HDAC1. Interacts (via LXCXE domain) with host RB1; the interaction induces the aberrant dissociation of RB1-E2F1 complex thereby disrupting RB1's activity. Interacts (via LXCXE domain) with host pRB-related proteins RBL1 and RBL2. Interacts (via C-terminus) with host TOP1 and POLA1 allowing DNA replication. Interacts with host preinitiation complex components TBP, TFIIA and TFIID to regulate transcription initiation. It depends on Mg(2+) as a cofactor. Post-translationally, phosphorylated on both serine and threonine residues. Small t antigen inhibits the dephosphorylation by the AC form of PP2A. O-Glycosylated near the C-terminal region. In terms of processing, acetylated by CBP in a TP53-dependent manner.

The protein resides in the host nucleus. It carries out the reaction Couples ATP hydrolysis with the unwinding of duplex DNA by translocating in the 3'-5' direction.. The catalysed reaction is ATP + H2O = ADP + phosphate + H(+). Functionally, isoform large T antigen is a key early protein essential for both driving viral replication and inducing cellular transformation. Plays a role in viral genome replication by driving entry of quiescent cells into the cell cycle and by autoregulating the synthesis of viral early mRNA. Displays highly oncogenic activities by corrupting the host cellular checkpoint mechanisms that guard cell division and the transcription, replication, and repair of DNA. Participates in the modulation of cellular gene expression preceeding viral DNA replication. This step involves binding to host key cell cycle regulators retinoblastoma protein RB1/pRb and TP53. Induces the disassembly of host E2F1 transcription factors from RB1, thus promoting transcriptional activation of E2F1-regulated S-phase genes. Inhibits host TP53 binding to DNA, abrogating the ability of TP53 to stimulate gene expression. Plays the role of a TFIID-associated factor (TAF) in transcription initiation for all three RNA polymerases, by stabilizing the TBP-TFIIA complex on promoters. Initiates viral DNA replication and unwinding via interactions with the viral origin of replication. Binds two adjacent sites in the SV40 origin. The replication fork movement is facilitated by Large T antigen helicase activity. Has processive 3'-5' DNA helicase activity which requires a short 3' single-stranded region and ATP. Activates the transcription of viral late mRNA, through host TBP and TFIIA stabilization. Interferes with histone deacetylation mediated by HDAC1, leading to activation of transcription. The chain is Large T antigen from Murine polyomavirus (strain Crawford small-plaque) (MPyV).